A 129-amino-acid chain; its full sequence is Large ribosomal subunit protein bL19 (129 aa).

Belongs to the bacterial ribosomal protein bL19 family.

Functionally, this protein is located at the 30S-50S ribosomal subunit interface and may play a role in the structure and function of the aminoacyl-tRNA binding site. This Burkholderia mallei (strain NCTC 10247) protein is Large ribosomal subunit protein bL19.